Reading from the N-terminus, the 299-residue chain is tRNA dimethylallyltransferase (299 aa).

An ATP-binding site is contributed by 13-20; sequence GPTASGKT. 15–20 is a binding site for substrate; it reads TASGKT. The interval 38-41 is interaction with substrate tRNA; the sequence is DSRQ.

It belongs to the IPP transferase family. In terms of assembly, monomer. Mg(2+) serves as cofactor.

It catalyses the reaction adenosine(37) in tRNA + dimethylallyl diphosphate = N(6)-dimethylallyladenosine(37) in tRNA + diphosphate. Catalyzes the transfer of a dimethylallyl group onto the adenine at position 37 in tRNAs that read codons beginning with uridine, leading to the formation of N6-(dimethylallyl)adenosine (i(6)A). The polypeptide is tRNA dimethylallyltransferase (Prochlorococcus marinus (strain NATL2A)).